Here is a 223-residue protein sequence, read N- to C-terminus: UPF0441 protein ETA_04310 (223 aa).

Residues 166-223 (YGAATPGRTMTVPKSALAPKPATTSTVTRGGFGESVAKQNTMQRNSSSTGSANRSMGG) form a disordered region. The span at 202–223 (AKQNTMQRNSSSTGSANRSMGG) shows a compositional bias: polar residues.

It belongs to the UPF0441 family.

This is UPF0441 protein ETA_04310 from Erwinia tasmaniensis (strain DSM 17950 / CFBP 7177 / CIP 109463 / NCPPB 4357 / Et1/99).